The primary structure comprises 249 residues: MKISICGKGGCGKSSITTLLAKEFAKKGHNVLVIDGDESNLSLHKLLGMDLPKDFIEYLGGRKEFMKKLREKMDGKEVELFEGEISIDSLPKEYLVEKDNIKLLAIGKIHDFGEGCACPMGALLREFLKSLKLKDKEVVIVDTEAGIEHFGRGVEGGCDVIIAIIDPTYESIRLSKKIEEIGEKLGKKVYFIVNKVDDETKDLILENVNKDKVIAVIPNNKEIMKCGLMGEELNAELSEIKDVVEILTK.

ATP is bound at residue 7–14; that stretch reads GKGGCGKS.

This is an uncharacterized protein from Methanocaldococcus jannaschii (strain ATCC 43067 / DSM 2661 / JAL-1 / JCM 10045 / NBRC 100440) (Methanococcus jannaschii).